The chain runs to 569 residues: Urease subunit beta (569 aa).

Residues 131–569 (GGIDTHIHFI…VSLAQLFSIF (439 aa)) form the Urease domain. Residues His136, His138, and Lys219 each contribute to the Ni(2+) site. Lys219 carries the post-translational modification N6-carboxylysine. Residue His221 coordinates substrate. The Ni(2+) site is built by His248 and His274. Residue His322 is the Proton donor of the active site. Residue Asp362 participates in Ni(2+) binding.

It belongs to the metallo-dependent hydrolases superfamily. Urease alpha subunit family. As to quaternary structure, heterohexamer of 3 UreA (alpha) and 3 UreB (beta) subunits. The cofactor is Ni cation. In terms of processing, carboxylation allows a single lysine to coordinate two nickel ions.

The protein localises to the cytoplasm. It carries out the reaction urea + 2 H2O + H(+) = hydrogencarbonate + 2 NH4(+). It functions in the pathway nitrogen metabolism; urea degradation; CO(2) and NH(3) from urea (urease route): step 1/1. This Helicobacter pylori (strain P12) protein is Urease subunit beta.